The primary structure comprises 210 residues: Proline-rich protein 20G (210 aa).

Over residues 1–11 (MEEPRHSKRPR) the composition is skewed to basic residues. The segment at 1-82 (MEEPRHSKRP…GGSWRAGRGR (82 aa)) is disordered. Positions 69–82 (GQRGGGSWRAGRGR) are enriched in gly residues.

It belongs to the PRR20 family.

The protein is Proline-rich protein 20G of Homo sapiens (Human).